A 338-amino-acid polypeptide reads, in one-letter code: Anthranilate phosphoribosyltransferase (338 aa).

Residues glycine 81, 84–85 (GD), threonine 89, 91–94 (NIST), 109–117 (KHGNRNLSS), and alanine 121 each bind 5-phospho-alpha-D-ribose 1-diphosphate. Glycine 81 lines the anthranilate pocket. Serine 93 contacts Mg(2+). Anthranilate is bound at residue asparagine 112. Arginine 167 is an anthranilate binding site. 2 residues coordinate Mg(2+): aspartate 226 and glutamate 227.

The protein belongs to the anthranilate phosphoribosyltransferase family. In terms of assembly, homodimer. Mg(2+) is required as a cofactor.

It carries out the reaction N-(5-phospho-beta-D-ribosyl)anthranilate + diphosphate = 5-phospho-alpha-D-ribose 1-diphosphate + anthranilate. It participates in amino-acid biosynthesis; L-tryptophan biosynthesis; L-tryptophan from chorismate: step 2/5. In terms of biological role, catalyzes the transfer of the phosphoribosyl group of 5-phosphorylribose-1-pyrophosphate (PRPP) to anthranilate to yield N-(5'-phosphoribosyl)-anthranilate (PRA). The protein is Anthranilate phosphoribosyltransferase of Cereibacter sphaeroides (strain ATCC 17025 / ATH 2.4.3) (Rhodobacter sphaeroides).